The chain runs to 389 residues: Sulfate adenylyltransferase (389 aa).

This sequence belongs to the sulfate adenylyltransferase family.

It catalyses the reaction sulfate + ATP + H(+) = adenosine 5'-phosphosulfate + diphosphate. The protein operates within sulfur metabolism; hydrogen sulfide biosynthesis; sulfite from sulfate: step 1/3. The chain is Sulfate adenylyltransferase from Hyperthermus butylicus (strain DSM 5456 / JCM 9403 / PLM1-5).